A 248-amino-acid chain; its full sequence is Meiotic drive suppressor wtf1 (248 aa).

Residues 30 to 68 (LLPEYNSDEESTLPPYSDHARVSNPPNTHRENHSSGTTD) are disordered. Helical transmembrane passes span 73–93 (FLIK…PAVC), 110–130 (WTLI…SWYF), 152–172 (IPMA…PRVT), and 186–206 (SLAD…VETV).

This sequence belongs to the WTF family. Homomer. Interacts with other proteins that exhibit high sequence similarity.

The protein resides in the spore membrane. It localises to the vacuole membrane. Its function is as follows. Acts as a suppressor component of the dual wtf meiotic drive system, and can suppress but not confer meiotic drive by compatible poisons. Wtf meiotic drive systems promote unequal transmission of alleles from the parental zygote to progeny spores by encoding a poison and an antidote from the same locus; the poison is trans-acting and forms toxic aggregates in all spores within an ascus, wherease the antidote is spore-specific and targets aggregates for degradation by the vacuole. Meiotic drive by wtf systems therefore lead to poisoning of all progeny that do not inherit the dual poison/antidote allele, or express a compatible antidote. This is Meiotic drive suppressor wtf1 from Schizosaccharomyces pombe (Fission yeast).